The primary structure comprises 323 residues: MSQFADFYQLIAKSPLSHWLNTLPAQLSEWEQTSQHCKFSQWFNAVERLPMLTPARLDLLHGVEADCDPPLSAGQQAGIESLLRQLMPWRKGPFSLYGVSIDTEWRSDWKWERVLPHIAPLAGRLILDVGCGSGYHLWRMVGAGAQLAVGIDPMQLFYCQFAAVRKLLGGDQRAHLLPLGIEQLPALAAFDTVFSMGVLYHRRSPLDHLLQLKNQLVSGGELVLETLVIEGDSQQVLVPGERYAQMRNVYFIPSATALVSWLEKCGFVNVRHVDMSVTSTDEQRRTAWMTSESLADFLHSDDPRLTVEGHPAPLRAVIVAEKH.

Carboxy-S-adenosyl-L-methionine contacts are provided by residues lysine 91, tryptophan 105, lysine 110, glycine 130, 181–182 (IE), methionine 196, tyrosine 200, and arginine 315.

This sequence belongs to the class I-like SAM-binding methyltransferase superfamily. CmoB family. Homotetramer.

It catalyses the reaction carboxy-S-adenosyl-L-methionine + 5-hydroxyuridine(34) in tRNA = 5-carboxymethoxyuridine(34) in tRNA + S-adenosyl-L-homocysteine + H(+). In terms of biological role, catalyzes carboxymethyl transfer from carboxy-S-adenosyl-L-methionine (Cx-SAM) to 5-hydroxyuridine (ho5U) to form 5-carboxymethoxyuridine (cmo5U) at position 34 in tRNAs. This Sodalis glossinidius (strain morsitans) protein is tRNA U34 carboxymethyltransferase.